The following is a 496-amino-acid chain: Squalene epoxidase ERG1 (496 aa).

At 1 to 16 (MSAVNVAPELINADNT) the chain is on the cytoplasmic side. A helical transmembrane segment spans residues 17-37 (ITYDAIVIGAGVIGPCVATGL). FAD is bound by residues 28–29 (VI), 48–49 (ER), arginine 56, and arginine 158. Over 38-474 (ARKGKKVLIV…FLGLPMALLE (437 aa)) the chain is Lumenal. Residues lysine 284, lysine 289, and lysine 311 each participate in a glycyl lysine isopeptide (Lys-Gly) (interchain with G-Cter in ubiquitin) cross-link. FAD is bound by residues aspartate 335 and methionine 348. A helical membrane pass occupies residues 475–495 (GIMILITAIRVFTPFLFGELI). A topological domain (cytoplasmic) is located at residue glycine 496.

The protein belongs to the squalene monooxygenase family. In terms of assembly, interacts with ERG28. It depends on FAD as a cofactor.

The protein resides in the microsome membrane. Its subcellular location is the endoplasmic reticulum membrane. The protein localises to the lipid droplet. The catalysed reaction is squalene + reduced [NADPH--hemoprotein reductase] + O2 = (S)-2,3-epoxysqualene + oxidized [NADPH--hemoprotein reductase] + H2O + H(+). The protein operates within terpene metabolism; lanosterol biosynthesis; lanosterol from farnesyl diphosphate: step 2/3. Its activity is regulated as follows. Inhibited by the allylamine antimycotic drugs. Its function is as follows. Squalene epoxidase; part of the third module of ergosterol biosynthesis pathway that includes the late steps of the pathway. ERG1 catalyzes the epoxidation of squalene into 2,3-epoxysqualene. The third module or late pathway involves the ergosterol synthesis itself through consecutive reactions that mainly occur in the endoplasmic reticulum (ER) membrane. Firstly, the squalene synthase ERG9 catalyzes the condensation of 2 farnesyl pyrophosphate moieties to form squalene, which is the precursor of all steroids. Squalene synthase is crucial for balancing the incorporation of farnesyl diphosphate (FPP) into sterol and nonsterol isoprene synthesis. Secondly, the squalene epoxidase ERG1 catalyzes the stereospecific oxidation of squalene to (S)-2,3-epoxysqualene, which is considered to be a rate-limiting enzyme in steroid biosynthesis. Then, the lanosterol synthase ERG7 catalyzes the cyclization of (S)-2,3 oxidosqualene to lanosterol, a reaction that forms the sterol core. In the next steps, lanosterol is transformed to zymosterol through a complex process involving various demethylation, reduction and desaturation reactions. The lanosterol 14-alpha-demethylase ERG11 (also known as CYP51) catalyzes C14-demethylation of lanosterol to produce 4,4'-dimethyl cholesta-8,14,24-triene-3-beta-ol, which is critical for ergosterol biosynthesis. The C-14 reductase ERG24 reduces the C14=C15 double bond of 4,4-dimethyl-cholesta-8,14,24-trienol to produce 4,4-dimethyl-cholesta-8,24-dienol. 4,4-dimethyl-cholesta-8,24-dienol is substrate of the C-4 demethylation complex ERG25-ERG26-ERG27 in which ERG25 catalyzes the three-step monooxygenation required for the demethylation of 4,4-dimethyl and 4alpha-methylsterols, ERG26 catalyzes the oxidative decarboxylation that results in a reduction of the 3-beta-hydroxy group at the C-3 carbon to an oxo group, and ERG27 is responsible for the reduction of the keto group on the C-3. ERG28 has a role as a scaffold to help anchor ERG25, ERG26 and ERG27 to the endoplasmic reticulum and ERG29 regulates the activity of the iron-containing C4-methylsterol oxidase ERG25. Then, the sterol 24-C-methyltransferase ERG6 catalyzes the methyl transfer from S-adenosyl-methionine to the C-24 of zymosterol to form fecosterol. The C-8 sterol isomerase ERG2 catalyzes the reaction which results in unsaturation at C-7 in the B ring of sterols and thus converts fecosterol to episterol. The sterol-C5-desaturase ERG3 then catalyzes the introduction of a C-5 double bond in the B ring to produce 5-dehydroepisterol. The C-22 sterol desaturase ERG5 further converts 5-dehydroepisterol into ergosta-5,7,22,24(28)-tetraen-3beta-ol by forming the C-22(23) double bond in the sterol side chain. Finally, ergosta-5,7,22,24(28)-tetraen-3beta-ol is substrate of the C-24(28) sterol reductase ERG4 to produce ergosterol. In Saccharomyces cerevisiae (strain ATCC 204508 / S288c) (Baker's yeast), this protein is Squalene epoxidase ERG1.